The following is a 435-amino-acid chain: Serine--tRNA ligase (435 aa).

241 to 243 (TAE) contributes to the L-serine binding site. 272–274 (RSE) contributes to the ATP binding site. Position 295 (E295) interacts with L-serine. Residue 359-362 (EISS) participates in ATP binding. Position 395 (S395) interacts with L-serine.

Belongs to the class-II aminoacyl-tRNA synthetase family. Type-1 seryl-tRNA synthetase subfamily. Homodimer. The tRNA molecule binds across the dimer.

It localises to the cytoplasm. It carries out the reaction tRNA(Ser) + L-serine + ATP = L-seryl-tRNA(Ser) + AMP + diphosphate + H(+). It catalyses the reaction tRNA(Sec) + L-serine + ATP = L-seryl-tRNA(Sec) + AMP + diphosphate + H(+). The protein operates within aminoacyl-tRNA biosynthesis; selenocysteinyl-tRNA(Sec) biosynthesis; L-seryl-tRNA(Sec) from L-serine and tRNA(Sec): step 1/1. Its function is as follows. Catalyzes the attachment of serine to tRNA(Ser). Is also able to aminoacylate tRNA(Sec) with serine, to form the misacylated tRNA L-seryl-tRNA(Sec), which will be further converted into selenocysteinyl-tRNA(Sec). In Actinobacillus pleuropneumoniae serotype 5b (strain L20), this protein is Serine--tRNA ligase.